Here is a 692-residue protein sequence, read N- to C-terminus: Putative receptor-like protein kinase At1g80870 (692 aa).

The chain crosses the membrane as a helical span at residues 20–40; the sequence is LFLILTISSSLVIFFAILYFI. The Protein kinase domain maps to 81-673; sequence FDESNVIGKG…GEMDISSTAF (593 aa). Residues 87–95 and Lys109 contribute to the ATP site; that span reads IGKGGSGTV. Residue Asp206 is the Proton acceptor of the active site. 2 disordered regions span residues 427 to 446 and 511 to 533; these read EISERKNKRSKNKKKKHRNM and RRKSNSSSKKKKKNNNGSMGSEM. Composition is skewed to basic residues over residues 432 to 444 and 511 to 524; these read KNKRSKNKKKKHR and RRKSNSSSKKKKKN.

It belongs to the protein kinase superfamily. Ser/Thr protein kinase family.

The protein localises to the cell membrane. The catalysed reaction is L-seryl-[protein] + ATP = O-phospho-L-seryl-[protein] + ADP + H(+). It carries out the reaction L-threonyl-[protein] + ATP = O-phospho-L-threonyl-[protein] + ADP + H(+). The sequence is that of Putative receptor-like protein kinase At1g80870 from Arabidopsis thaliana (Mouse-ear cress).